The chain runs to 20 residues: GSLGEKYAQKAAEVLTSIIP.

Expressed by the venom gland.

The protein localises to the secreted. This is Venom peptide Ocy8 from Opisthacanthus cayaporum (South American scorpion).